A 559-amino-acid chain; its full sequence is Poly(U)-binding-splicing factor PUF60 (559 aa).

The inhibits homodimerization stretch occupies residues methionine 1–phenylalanine 516. Residues glutamine 14 and lysine 43 each participate in a glycyl lysine isopeptide (Lys-Gly) (interchain with G-Cter in SUMO2) cross-link. The residue at position 60 (threonine 60) is a Phosphothreonine. The segment at glutamine 77–alanine 559 is inhibits transcriptional repression, interaction with ERCC3 and apoptosis induction. Lysine 80 participates in a covalent cross-link: Glycyl lysine isopeptide (Lys-Gly) (interchain with G-Cter in SUMO2). The residue at position 112 (serine 112) is a Phosphoserine. RRM domains follow at residues cysteine 129 to asparagine 207 and asparagine 226 to threonine 304. Serine 244 is subject to Phosphoserine. The residue at position 251 (lysine 251) is an N6-acetyllysine. Position 314 is a phosphothreonine (threonine 314). The tract at residues lysine 416–glutamine 437 is disordered. A Glycyl lysine isopeptide (Lys-Gly) (interchain with G-Cter in SUMO2) cross-link involves residue lysine 419. A compositionally biased stretch (basic and acidic residues) spans glutamate 427–glutamine 437. Residue lysine 454 is modified to N6-acetyllysine. Lysine 458 is covalently cross-linked (Glycyl lysine isopeptide (Lys-Gly) (interchain with G-Cter in SUMO2)). The region spanning threonine 462–glutamine 549 is the RRM 3; atypical domain.

It belongs to the RRM half pint family. As to quaternary structure, homodimer. Associates with the spliceosome. Found in a complex with RO60 and Y5 RNA. Found in a complex with FUBP1 and far upstream element (FUSE) DNA segment. Interacts directly with ERCC3. Interacts with CDK7 and GTF2H1. Interacts with SRSF11/P54. Does not interact with ERCC3 in xeroderma pigmentosum complementation group B (XPB) cells. Interacts with ARGLU1; interaction may be involved in ARGLU1-mediated modulation of alternative splicing. Isoform 2 is expressed in colonic epithelium and colorectal epithelium cancer (at protein level). Isoform 6 is expressed in colorectal epithelial cancer but below detection level in colonic epithelium. Expressed in heart, brain, placenta, lung, liver, skeletal muscle, kidney, pancreas, spleen, thymus, prostate, testis, ovary, small intestine, colon and peripheral blood leukocytes.

Its subcellular location is the nucleus. DNA- and RNA-binding protein, involved in several nuclear processes such as pre-mRNA splicing, apoptosis and transcription regulation. In association with FUBP1 regulates MYC transcription at the P2 promoter through the core-TFIIH basal transcription factor. Acts as a transcriptional repressor through the core-TFIIH basal transcription factor. Represses FUBP1-induced transcriptional activation but not basal transcription. Decreases ERCC3 helicase activity. Does not repress TFIIH-mediated transcription in xeroderma pigmentosum complementation group B (XPB) cells. Is also involved in pre-mRNA splicing. Promotes splicing of an intron with weak 3'-splice site and pyrimidine tract in a cooperative manner with U2AF2. Involved in apoptosis induction when overexpressed in HeLa cells. Isoform 6 failed to repress MYC transcription and inhibited FIR-induced apoptosis in colorectal cancer. Isoform 6 may contribute to tumor progression by enabling increased MYC expression and greater resistance to apoptosis in tumors than in normal cells. Modulates alternative splicing of several mRNAs. Binds to relaxed DNA of active promoter regions. Binds to the pyrimidine tract and 3'-splice site regions of pre-mRNA; binding is enhanced in presence of U2AF2. Binds to Y5 RNA in association with RO60. Binds to poly(U) RNA. This is Poly(U)-binding-splicing factor PUF60 from Homo sapiens (Human).